Reading from the N-terminus, the 176-residue chain is RING-H2 finger protein ATL73 (176 aa).

The N-terminal stretch at 1–16 is a signal peptide; sequence MARFLLATQATPTISA. Residues 42-62 form a helical membrane-spanning segment; the sequence is VIILAALLCALICALGINSVL. The segment at 113 to 155 adopts an RING-type; atypical zinc-finger fold; the sequence is CLICLGDFVEGETVRVLPKCNHGFHVKCIDTWLLSHSSCPTCR.

It belongs to the RING-type zinc finger family. ATL subfamily.

The protein localises to the membrane. It catalyses the reaction S-ubiquitinyl-[E2 ubiquitin-conjugating enzyme]-L-cysteine + [acceptor protein]-L-lysine = [E2 ubiquitin-conjugating enzyme]-L-cysteine + N(6)-ubiquitinyl-[acceptor protein]-L-lysine.. It participates in protein modification; protein ubiquitination. The polypeptide is RING-H2 finger protein ATL73 (ATL73) (Arabidopsis thaliana (Mouse-ear cress)).